Here is a 479-residue protein sequence, read N- to C-terminus: Anaerobic nitric oxide reductase flavorubredoxin (479 aa).

The interval 30-210 is zinc metallo-hydrolase; the sequence is LRGSSYNSYL…PFSRLVTPKI (181 aa). Residues His-79, Glu-81, Asp-83, His-147, Asp-166, and His-227 each coordinate Fe cation. A Flavodoxin-like domain is found at 254–393; it reads ITIFYDTMSN…LCREHGREIA (140 aa). Residues 260 to 264 and 342 to 369 each bind FMN; these read TMSNN and AFGS…EMSL. The Rubredoxin-like domain maps to 423-474; it reads GPRMQCSVCQWIYDPAKGEPMQDVAPGTPWSEVPDNFLCPECSLGKDVFDEL. 4 residues coordinate Fe cation: Cys-428, Cys-431, Cys-461, and Cys-464.

The protein in the N-terminal section; belongs to the zinc metallo-hydrolase group 3 family. Homotetramer. Fe cation is required as a cofactor. The cofactor is FMN.

The protein resides in the cytoplasm. It functions in the pathway nitrogen metabolism; nitric oxide reduction. Functionally, anaerobic nitric oxide reductase; uses NADH to detoxify nitric oxide (NO), protecting several 4Fe-4S NO-sensitive enzymes. Has at least 2 reductase partners, only one of which (NorW, flavorubredoxin reductase) has been identified. NO probably binds to the di-iron center; electrons enter from the NorW at rubredoxin and are transferred sequentially to the FMN center and the di-iron center. Also able to function as an aerobic oxygen reductase. In Escherichia coli (strain SMS-3-5 / SECEC), this protein is Anaerobic nitric oxide reductase flavorubredoxin.